We begin with the raw amino-acid sequence, 82 residues long: uncharacterized protein (82 aa).

Its function is as follows. This protein may be involved in virus assembly. This is an uncharacterized protein from Sulfolobus spindle-shape virus 1 (SSV1).